Reading from the N-terminus, the 61-residue chain is Small ribosomal subunit protein uS14 (61 aa).

Zn(2+) contacts are provided by Cys-24, Cys-27, Cys-40, and Cys-43.

The protein belongs to the universal ribosomal protein uS14 family. Zinc-binding uS14 subfamily. Part of the 30S ribosomal subunit. Contacts proteins S3 and S10. The cofactor is Zn(2+).

Functionally, binds 16S rRNA, required for the assembly of 30S particles and may also be responsible for determining the conformation of the 16S rRNA at the A site. The polypeptide is Small ribosomal subunit protein uS14 (Oleidesulfovibrio alaskensis (strain ATCC BAA-1058 / DSM 17464 / G20) (Desulfovibrio alaskensis)).